We begin with the raw amino-acid sequence, 111 residues long: Notch-regulated ankyrin repeat-containing protein B (111 aa).

ANK repeat units lie at residues 47-76 and 80-109; these read EGQT…DTRL and DGWS…YSSS.

It belongs to the NRARP family.

Functionally, regulates independently canonical Wnt and Notch signaling by modulating LEF1 and Notch protein turnover. Stabilizes LEF1, a pivotal transcription factor in the Wnt signaling cascade, by blocking its ubiquitination. Involved in angiogenesis; involved in intersegmental vessel patterning during development. This Danio rerio (Zebrafish) protein is Notch-regulated ankyrin repeat-containing protein B (nrarpb).